A 302-amino-acid polypeptide reads, in one-letter code: Ribosome-binding factor PSRP1, chloroplastic (302 aa).

Residues 1 to 66 (MATLCTSAIN…SRNKPNVVCM (66 aa)) constitute a chloroplast transit peptide.

Binds to the mRNA channel of the chloroplast small ribosomal subunit and interacts with 16S sRNA nucleotides at the A-site and P-site.

The protein resides in the plastid. It is found in the chloroplast stroma. Ribosome-binding factor involved in light- and temperature-dependent control of protein synthesis. Interacts with 16S sRNA nucleotides at the A-site and P-site, where it protects the decoding center and inhibits translation by preventing tRNA binding. Stabilizes 70S ribosomes against dissociation. May be recycled by the combined action of ribosome-recycling factor (RRF) and EF-G. This is Ribosome-binding factor PSRP1, chloroplastic (PSRP1) from Spinacia oleracea (Spinach).